The primary structure comprises 156 residues: 6,7-dimethyl-8-ribityllumazine synthase (156 aa).

Residues Phe-22, 57–59 (AYE), and 81–83 (TVI) each bind 5-amino-6-(D-ribitylamino)uracil. Position 86–87 (86–87 (GT)) interacts with (2S)-2-hydroxy-3-oxobutyl phosphate. His-89 (proton donor) is an active-site residue. Phe-114 serves as a coordination point for 5-amino-6-(D-ribitylamino)uracil. A (2S)-2-hydroxy-3-oxobutyl phosphate-binding site is contributed by Arg-128.

It belongs to the DMRL synthase family. As to quaternary structure, forms an icosahedral capsid composed of 60 subunits, arranged as a dodecamer of pentamers.

It carries out the reaction (2S)-2-hydroxy-3-oxobutyl phosphate + 5-amino-6-(D-ribitylamino)uracil = 6,7-dimethyl-8-(1-D-ribityl)lumazine + phosphate + 2 H2O + H(+). Its pathway is cofactor biosynthesis; riboflavin biosynthesis; riboflavin from 2-hydroxy-3-oxobutyl phosphate and 5-amino-6-(D-ribitylamino)uracil: step 1/2. Catalyzes the formation of 6,7-dimethyl-8-ribityllumazine by condensation of 5-amino-6-(D-ribitylamino)uracil with 3,4-dihydroxy-2-butanone 4-phosphate. This is the penultimate step in the biosynthesis of riboflavin. This Salmonella heidelberg (strain SL476) protein is 6,7-dimethyl-8-ribityllumazine synthase.